The primary structure comprises 211 residues: UPF0319 protein VC_A0026 (211 aa).

An N-terminal signal peptide occupies residues 1-21; that stretch reads MKPMQRLTCLLALCFAASASA.

This sequence belongs to the UPF0319 family.

This is UPF0319 protein VC_A0026 from Vibrio cholerae serotype O1 (strain ATCC 39315 / El Tor Inaba N16961).